A 590-amino-acid polypeptide reads, in one-letter code: MCLDIWRHKKKVLPLLLLMAIGSIIYYLYTLKLEGERDESATSTTSRLERDIRDLQAVFESEVIPDLGALGRPARGNWTEEQLEAIAKSQRETGYNAWLSKRISPERSLYDMRHRSCKKLKYPMEKLPSVSVVITYHNEEASVLLRTLSSLRSRTPIQLLREVILVDDGSTQADEKLNDFIKIKFLNMVQHRRITTQVGLMHARVVGAELALADVLVFLDSHVEVTKGWLEPLIAPILEDNRTCTTPIIDTIDFDNFAYRRGKPSRGFFNWEFNYIQLPLLKEEAVAMPAPHKNPIMNGGLFAIGREWFSELGGYDKGLKIWGAEQFELSLKLWLCGGQILEVPCSRVGHLFRDGNFQIRYTNKDKNSEKKLISRNYRRVAEIWLDEYKDKLFANMPHLTVIPVGNLAEQRDLKNRLHCKPFKWFLDNLATDFLNLYPILDPAEYASGVLQSISSPKLCLDRKDPSHGQPKLAPCSSDHVFPSPEQYWSLTNHRELRSGFYCLEVRNHGVNVHIYQCHGQSGNQFWSFDSKTHQVISGQQQNFRHCLEAQPELNAVTSSVCDPKNHKQQWKFGYLNSQRLQHFWDNVKTQ.

Over 1 to 11 the chain is Cytoplasmic; that stretch reads MCLDIWRHKKK. Residues 12–31 form a helical; Signal-anchor for type II membrane protein membrane-spanning segment; it reads VLPLLLLMAIGSIIYYLYTL. The Lumenal portion of the chain corresponds to 32-590; sequence KLEGERDESA…QHFWDNVKTQ (559 aa). An N-linked (GlcNAc...) asparagine glycan is attached at Asn77. 5 cysteine pairs are disulfide-bonded: Cys117-Cys345, Cys336-Cys419, Cys459-Cys475, Cys502-Cys517, and Cys546-Cys561. The catalytic subdomain A stretch occupies residues 127–236; it reads LPSVSVVITY…KGWLEPLIAP (110 aa). Substrate is bound at residue Asp168. Asp220 contacts Mn(2+). Ser221 is a binding site for substrate. Residue His222 participates in Mn(2+) binding. Residue Asn241 is glycosylated (N-linked (GlcNAc...) asparagine). Residues 291 to 353 are catalytic subdomain B; sequence PHKNPIMNGG…PCSRVGHLFR (63 aa). Trp322 is a binding site for substrate. Residue His350 participates in Mn(2+) binding. Arg353 contacts substrate. In terms of domain architecture, Ricin B-type lectin spans 446 to 573; that stretch reads ASGVLQSISS…KNHKQQWKFG (128 aa).

The protein belongs to the glycosyltransferase 2 family. GalNAc-T subfamily. Mn(2+) serves as cofactor. Expressed in developing oocytes and egg chambers. During embryonic stages 9-11, expressed in the primordium of the foregut, midgut and hindgut. During embryonic stages 12-13, expressed in the posterior midgut and hindgut. During embryonic stages 14-15, expression continues in the hindgut. No expression detected during embryonic stages 16-17 or in third instar larvae imaginal disks.

Its subcellular location is the golgi apparatus membrane. The catalysed reaction is L-seryl-[protein] + UDP-N-acetyl-alpha-D-galactosamine = a 3-O-[N-acetyl-alpha-D-galactosaminyl]-L-seryl-[protein] + UDP + H(+). It carries out the reaction L-threonyl-[protein] + UDP-N-acetyl-alpha-D-galactosamine = a 3-O-[N-acetyl-alpha-D-galactosaminyl]-L-threonyl-[protein] + UDP + H(+). It functions in the pathway protein modification; protein glycosylation. Its function is as follows. Catalyzes the initial reaction in O-linked oligosaccharide biosynthesis, the transfer of an N-acetyl-D-galactosamine residue to a serine or threonine residue on the protein receptor. It can both act as a peptide transferase that transfers GalNAc onto unmodified peptide substrates, and as a glycopeptide transferase that requires the prior addition of a GalNAc on a peptide before adding additional GalNAc moieties. Prefers both EA2 and the diglycosylated Muc5AC-3/13 as substrates, albeit at very low levels fro Muc5AC-3/13. The polypeptide is Polypeptide N-acetylgalactosaminyltransferase 8 (Drosophila melanogaster (Fruit fly)).